Reading from the N-terminus, the 1052-residue chain is Mediator of RNA polymerase II transcription subunit 5 (1052 aa).

The interval 949 to 982 (GGDDEQREQHQQQQPDADQSNQGVVAPTGNTPGN) is disordered. A compositionally biased stretch (low complexity) spans 959-970 (QQQQPDADQSNQ).

The protein belongs to the Mediator complex subunit 5 family. Component of the Mediator complex.

Its subcellular location is the nucleus. Its function is as follows. Component of the Mediator complex, a coactivator involved in the regulated transcription of nearly all RNA polymerase II-dependent genes. Mediator functions as a bridge to convey information from gene-specific regulatory proteins to the basal RNA polymerase II transcription machinery. Mediator is recruited to promoters by direct interactions with regulatory proteins and serves as a scaffold for the assembly of a functional preinitiation complex with RNA polymerase II and the general transcription factors. This chain is Mediator of RNA polymerase II transcription subunit 5 (NUT1), found in Coccidioides immitis (strain RS) (Valley fever fungus).